The sequence spans 388 residues: Riboflavin biosynthesis protein RibBA (388 aa).

The tract at residues M1–K186 is DHBP synthase. Residues R21–E22, D26, R125–T129, and E149 each bind D-ribulose 5-phosphate. E22 is a Mg(2+) binding site. H128 contributes to the Mg(2+) binding site. The interval R187–S388 is GTP cyclohydrolase II. Residue R235–E239 participates in GTP binding. Zn(2+) is bound by residues C240, C251, and C253. Residues Q256, E277–R279, and T299 contribute to the GTP site. The active-site Proton acceptor; for GTP cyclohydrolase activity is the D311. R313 functions as the Nucleophile; for GTP cyclohydrolase activity in the catalytic mechanism. Positions 334 and 339 each coordinate GTP.

This sequence in the N-terminal section; belongs to the DHBP synthase family. The protein in the C-terminal section; belongs to the GTP cyclohydrolase II family. Mg(2+) serves as cofactor. It depends on Mn(2+) as a cofactor. Requires Zn(2+) as cofactor.

The enzyme catalyses D-ribulose 5-phosphate = (2S)-2-hydroxy-3-oxobutyl phosphate + formate + H(+). It catalyses the reaction GTP + 4 H2O = 2,5-diamino-6-hydroxy-4-(5-phosphoribosylamino)-pyrimidine + formate + 2 phosphate + 3 H(+). The protein operates within cofactor biosynthesis; riboflavin biosynthesis; 2-hydroxy-3-oxobutyl phosphate from D-ribulose 5-phosphate: step 1/1. It functions in the pathway cofactor biosynthesis; riboflavin biosynthesis; 5-amino-6-(D-ribitylamino)uracil from GTP: step 1/4. Catalyzes the conversion of D-ribulose 5-phosphate to formate and 3,4-dihydroxy-2-butanone 4-phosphate. Functionally, catalyzes the conversion of GTP to 2,5-diamino-6-ribosylamino-4(3H)-pyrimidinone 5'-phosphate (DARP), formate and pyrophosphate. This chain is Riboflavin biosynthesis protein RibBA, found in Thermotoga maritima (strain ATCC 43589 / DSM 3109 / JCM 10099 / NBRC 100826 / MSB8).